Consider the following 340-residue polypeptide: MSVIQKNWQELIKPNKLMIELVGGSKKVATVVAEPLERGFGLTLGNALRRVLLSSLQGAAVTAIQIEGVLHEFSSIPGVREDVTDVILNIKGLALLMHSEGPRRMTLKASGPGEVTAAQIEMGSDIEIMNPDLVICHLDEGATLSMEFTVGMGKGYVPSTQNRPEDAPIGYIPIDSIFSPVTKVSYRVENSRVGQVTDYDKLSMVVETDGSVGPEDAVALAARILQDQLQLFINFEEPQAVSEEKKDDELPFNKNLLRKVDELELSVRSANCLKNDNIIYIGDLVQKTEAEMLRTPNFGRKSLNEIKEVLAQMGLHLGMEISNWPPENIEDLAKKLEEPY.

Residues 1–236 (MSVIQKNWQE…DQLQLFINFE (236 aa)) are alpha N-terminal domain (alpha-NTD). The interval 252 to 340 (FNKNLLRKVD…DLAKKLEEPY (89 aa)) is alpha C-terminal domain (alpha-CTD).

Belongs to the RNA polymerase alpha chain family. In terms of assembly, homodimer. The RNAP catalytic core consists of 2 alpha, 1 beta, 1 beta' and 1 omega subunit. When a sigma factor is associated with the core the holoenzyme is formed, which can initiate transcription.

The enzyme catalyses RNA(n) + a ribonucleoside 5'-triphosphate = RNA(n+1) + diphosphate. Its function is as follows. DNA-dependent RNA polymerase catalyzes the transcription of DNA into RNA using the four ribonucleoside triphosphates as substrates. This is DNA-directed RNA polymerase subunit alpha from Rhodospirillum rubrum (strain ATCC 11170 / ATH 1.1.1 / DSM 467 / LMG 4362 / NCIMB 8255 / S1).